A 316-amino-acid chain; its full sequence is Ribosomal RNA small subunit methyltransferase H (316 aa).

S-adenosyl-L-methionine contacts are provided by residues 37–39, Asp-56, Phe-83, Asp-106, and His-113; that span reads GGH. The interval 276 to 316 is disordered; the sequence is PILPSEEETKENPASRSAKLRVLRKTKSADKKYKKENSKEE. The span at 302–316 shows a compositional bias: basic and acidic residues; it reads KSADKKYKKENSKEE.

The protein belongs to the methyltransferase superfamily. RsmH family.

Its subcellular location is the cytoplasm. The catalysed reaction is cytidine(1402) in 16S rRNA + S-adenosyl-L-methionine = N(4)-methylcytidine(1402) in 16S rRNA + S-adenosyl-L-homocysteine + H(+). Its function is as follows. Specifically methylates the N4 position of cytidine in position 1402 (C1402) of 16S rRNA. This chain is Ribosomal RNA small subunit methyltransferase H, found in Leptospira borgpetersenii serovar Hardjo-bovis (strain L550).